Consider the following 140-residue polypeptide: Hemoglobin subunit beta (140 aa).

A Globin domain is found at 1 to 140; that stretch reads GSDLVSGFWG…VGDALAKAYH (140 aa). Heme b-binding residues include H57 and H86.

The protein belongs to the globin family. In terms of assembly, heterotetramer of two alpha chains and two beta chains. In terms of tissue distribution, red blood cells.

Its function is as follows. Involved in oxygen transport from the lung to the various peripheral tissues. This is Hemoglobin subunit beta (HBB) from Pelophylax lessonae (Pool frog).